The sequence spans 405 residues: Imidazolonepropionase (405 aa).

Fe(3+) contacts are provided by His-73 and His-75. Positions 73 and 75 each coordinate Zn(2+). Residues Arg-82, Tyr-145, and His-178 each contribute to the 4-imidazolone-5-propanoate site. Tyr-145 lines the N-formimidoyl-L-glutamate pocket. His-243 lines the Fe(3+) pocket. His-243 is a binding site for Zn(2+). Position 246 (Gln-246) interacts with 4-imidazolone-5-propanoate. Asp-318 is a Fe(3+) binding site. Asp-318 contacts Zn(2+). N-formimidoyl-L-glutamate is bound by residues Asn-320 and Gly-322. Thr-323 contributes to the 4-imidazolone-5-propanoate binding site.

It belongs to the metallo-dependent hydrolases superfamily. HutI family. Zn(2+) serves as cofactor. It depends on Fe(3+) as a cofactor.

The protein resides in the cytoplasm. It carries out the reaction 4-imidazolone-5-propanoate + H2O = N-formimidoyl-L-glutamate. It participates in amino-acid degradation; L-histidine degradation into L-glutamate; N-formimidoyl-L-glutamate from L-histidine: step 3/3. Catalyzes the hydrolytic cleavage of the carbon-nitrogen bond in imidazolone-5-propanoate to yield N-formimidoyl-L-glutamate. It is the third step in the universal histidine degradation pathway. The sequence is that of Imidazolonepropionase from Brucella suis (strain ATCC 23445 / NCTC 10510).